Here is a 74-residue protein sequence, read N- to C-terminus: Large ribosomal subunit protein bL28 (74 aa).

This sequence belongs to the bacterial ribosomal protein bL28 family.

The protein is Large ribosomal subunit protein bL28 of Desulforapulum autotrophicum (strain ATCC 43914 / DSM 3382 / VKM B-1955 / HRM2) (Desulfobacterium autotrophicum).